Reading from the N-terminus, the 109-residue chain is Aquaporin-2 (109 aa).

Over 1–6 (SIAFSR) the chain is Cytoplasmic. A helical membrane pass occupies residues 7-27 (AVFSEFLATLLFVFFGLGSAL). The Extracellular segment spans residues 28 to 35 (NWPQALPS). Residues 36 to 54 (VLQIAMAFGLAIGTLVQAL) form a helical membrane-spanning segment. Residues 55–59 (GHISG) lie on the Cytoplasmic side of the membrane. The discontinuously helical intramembrane region spans 60–69 (AHINPAVTVA). An NPA 1 motif is present at residues 63–65 (NPA). Topologically, residues 70–80 (CLVGCHVSFLR) are cytoplasmic. Residues 81-102 (ATFYLAAQLLGAVAGAAILHEI) traverse the membrane as a helical segment. Residues 103-109 (TPPDIRG) are Extracellular-facing.

The protein belongs to the MIP/aquaporin (TC 1.A.8) family. In terms of assembly, homotetramer. In terms of processing, serine phosphorylation is necessary and sufficient for expression at the apical membrane. Endocytosis is not phosphorylation-dependent. Post-translationally, N-glycosylated.

The protein resides in the apical cell membrane. The protein localises to the basolateral cell membrane. It is found in the cell membrane. Its subcellular location is the cytoplasmic vesicle membrane. It localises to the golgi apparatus. The protein resides in the trans-Golgi network membrane. The enzyme catalyses H2O(in) = H2O(out). It carries out the reaction glycerol(in) = glycerol(out). In terms of biological role, forms a water-specific channel that provides the plasma membranes of renal collecting duct with high permeability to water, thereby permitting water to move in the direction of an osmotic gradient. Plays an essential role in renal water homeostasis. Could also be permeable to glycerol. This is Aquaporin-2 from Dugong dugon (Dugong).